A 320-amino-acid polypeptide reads, in one-letter code: MALLDEVKSELSNIDGGSPAVQKAQVTSMLYFGRGFRKVQRESSTQIIVQPQFDSMEAAHWLQETIESLYKIPAALKSVDVKTPQGSMRRYAVDVGARAGFALAVRTGMIDPRLNRIVRGLPTDLSNGNIAQIKGVWRGAFMSAGVLSDPDKPSALEIICPNEETADSLIAMGQRLGIRAAKHTVRSSVRVHLSDPDAIERLLTMMGASSTVRDWTGKRPDTESHHRANRLANFDDANMRRSAKAAAEAVVKVQHAFDVLGDDIPQNLRAAGQLRIDHPDFSLEELGRAARPQISKDAVAGRIRRLLQRAEKAEQDAAMA.

Positions 282–315 (SLEELGRAARPQISKDAVAGRIRRLLQRAEKAEQ) form a DNA-binding region, H-T-H motif.

The protein belongs to the WhiA family.

In terms of biological role, involved in cell division and chromosome segregation. The chain is Probable cell division protein WhiA from Bifidobacterium animalis subsp. lactis (strain AD011).